Consider the following 159-residue polypeptide: Small ribosomal subunit protein uS13 (159 aa).

Residues 136–159 (QRTRSTGRSGATVGVTRKKTQAKK) are disordered. Residues 138-149 (TRSTGRSGATVG) are compositionally biased toward low complexity.

This sequence belongs to the universal ribosomal protein uS13 family. Part of the 30S ribosomal subunit. Forms a loose heterodimer with protein S19. Forms two bridges to the 50S subunit in the 70S ribosome.

Located at the top of the head of the 30S subunit, it contacts several helices of the 16S rRNA. In the 70S ribosome it contacts the 23S rRNA (bridge B1a) and protein L5 of the 50S subunit (bridge B1b), connecting the 2 subunits; these bridges are implicated in subunit movement. This chain is Small ribosomal subunit protein uS13, found in Methanothrix thermoacetophila (strain DSM 6194 / JCM 14653 / NBRC 101360 / PT) (Methanosaeta thermophila).